We begin with the raw amino-acid sequence, 148 residues long: Large ribosomal subunit protein bL9 (148 aa).

The protein belongs to the bacterial ribosomal protein bL9 family.

In terms of biological role, binds to the 23S rRNA. This is Large ribosomal subunit protein bL9 from Bifidobacterium adolescentis (strain ATCC 15703 / DSM 20083 / NCTC 11814 / E194a).